A 612-amino-acid polypeptide reads, in one-letter code: Dihydroxy-acid dehydratase (612 aa).

A Mg(2+)-binding site is contributed by aspartate 81. Cysteine 122 provides a ligand contact to [2Fe-2S] cluster. Mg(2+)-binding residues include aspartate 123 and lysine 124. Lysine 124 is subject to N6-carboxylysine. Cysteine 193 provides a ligand contact to [2Fe-2S] cluster. Position 489 (glutamate 489) interacts with Mg(2+). The active-site Proton acceptor is the serine 515.

This sequence belongs to the IlvD/Edd family. As to quaternary structure, homodimer. The cofactor is [2Fe-2S] cluster. Mg(2+) is required as a cofactor.

It carries out the reaction (2R)-2,3-dihydroxy-3-methylbutanoate = 3-methyl-2-oxobutanoate + H2O. It catalyses the reaction (2R,3R)-2,3-dihydroxy-3-methylpentanoate = (S)-3-methyl-2-oxopentanoate + H2O. It functions in the pathway amino-acid biosynthesis; L-isoleucine biosynthesis; L-isoleucine from 2-oxobutanoate: step 3/4. It participates in amino-acid biosynthesis; L-valine biosynthesis; L-valine from pyruvate: step 3/4. Functionally, functions in the biosynthesis of branched-chain amino acids. Catalyzes the dehydration of (2R,3R)-2,3-dihydroxy-3-methylpentanoate (2,3-dihydroxy-3-methylvalerate) into 2-oxo-3-methylpentanoate (2-oxo-3-methylvalerate) and of (2R)-2,3-dihydroxy-3-methylbutanoate (2,3-dihydroxyisovalerate) into 2-oxo-3-methylbutanoate (2-oxoisovalerate), the penultimate precursor to L-isoleucine and L-valine, respectively. This Ectopseudomonas mendocina (strain ymp) (Pseudomonas mendocina) protein is Dihydroxy-acid dehydratase.